The primary structure comprises 556 residues: Potassium-transporting ATPase potassium-binding subunit (556 aa).

10 helical membrane passes run Ala-6 to Gly-26, Ser-65 to Gly-85, Gly-133 to Val-153, Leu-176 to Ile-196, Pro-249 to Pro-269, Ala-283 to Phe-303, Gly-378 to Gly-398, Tyr-419 to Gly-439, Ala-483 to Ala-503, and Phe-526 to Leu-546.

This sequence belongs to the KdpA family. The system is composed of three essential subunits: KdpA, KdpB and KdpC.

It is found in the cell membrane. In terms of biological role, part of the high-affinity ATP-driven potassium transport (or Kdp) system, which catalyzes the hydrolysis of ATP coupled with the electrogenic transport of potassium into the cytoplasm. This subunit binds the extracellular potassium ions and delivers the ions to the membrane domain of KdpB through an intramembrane tunnel. This chain is Potassium-transporting ATPase potassium-binding subunit, found in Mycobacterium sp. (strain KMS).